The following is a 578-amino-acid chain: Kelch repeat-containing protein kel-10 (578 aa).

Positions 51-118 (PTVTLVLRNN…PKAFEQGIKP (68 aa)) constitute a BTB domain. Positions 158 to 236 (IKIFRLALLY…NSPLQSDRMA (79 aa)) constitute a BACK domain. Kelch repeat units lie at residues 265–315 (AIVC…VVED), 316–362 (KLIV…RIND), 368–414 (LIFA…TIDN), 416–462 (IVVI…SIMN), 464–510 (VCMI…QMDT), and 512–558 (SIYV…TLSD).

The sequence is that of Kelch repeat-containing protein kel-10 from Caenorhabditis elegans.